We begin with the raw amino-acid sequence, 49 residues long: Large ribosomal subunit protein bL33B (49 aa).

Belongs to the bacterial ribosomal protein bL33 family.

This chain is Large ribosomal subunit protein bL33B, found in Lactobacillus delbrueckii subsp. bulgaricus (strain ATCC BAA-365 / Lb-18).